Here is a 344-residue protein sequence, read N- to C-terminus: BURP domain-containing protein 16 (344 aa).

An N-terminal signal peptide occupies residues 1–25 (MATSFLFSLILLLITALSLPFPLHA). N-linked (GlcNAc...) asparagine glycans are attached at residues Asn90, Asn120, Asn181, and Asn333. The BURP domain maps to 128 to 341 (FFREQELKEG…FNGSMTWVIA (214 aa)).

Expressed in roots, stems, leaves and panicles.

The protein is BURP domain-containing protein 16 (BURP16) of Oryza sativa subsp. japonica (Rice).